A 507-amino-acid chain; its full sequence is MEELQGYLEIDRSRQQHFLYPLLFQEYIYALAHDHGLNGSIFYEPMENLGYDNKSSSLIVKRLITRMHQQNHLIISVNDSNENGFVGHNKSFYSQMVSEGFAVIMEIPFSLRLVSSLEEKEIAKSHNLRSIHSIFPFFEDKLSHLNHVSDILIPHPIHLEILVQTLHCWIQDAPSLHLLRFFLHEYRNSNSLITPKKSISLFSKENQRFFLFLYNSHVYECESVLVFLRKQSSHLRSTSSGTFLERTHFYGKIEHLVVVLRNDFQKTLWLFKDPFMHYVRYQGKYILASKGTHLLMKKWKSHLVNFWQCHFYLWSRPDRIHINQLYNHSFYFLGYLSSVRLNTSAVRIQMLENSFLIDTSINKFETLVPIISLIGSVAKAKFCNVSGHPISKSVRADSSDSDIINRFGRIYRNLSHYHSGSSKKQTLYRIKYILRLSCARTLARKHKSTVRAFLKRLGSEFLEEFLTEEEQVLSLIFQRNSFPSYRSHRERIWYLDIIRINDLANHS.

This sequence belongs to the intron maturase 2 family. MatK subfamily.

It localises to the plastid. It is found in the chloroplast. Usually encoded in the trnK tRNA gene intron. Probably assists in splicing its own and other chloroplast group II introns. This chain is Maturase K, found in Liriodendron tulipifera (Tuliptree).